Consider the following 657-residue polypeptide: Wall-associated receptor kinase-like 20 (657 aa).

Residues Met1–Ala23 form the signal peptide. Residues Gly24–Val293 lie on the Extracellular side of the membrane. N-linked (GlcNAc...) asparagine glycosylation is present at Asn140. A helical transmembrane segment spans residues Val294–Ile314. The Cytoplasmic portion of the chain corresponds to Gly315–Thr657. The 284-residue stretch at Phe363–Ile646 folds into the Protein kinase domain. Residues Ile369–Val377 and Lys391 contribute to the ATP site. The active-site Proton acceptor is Asp490.

The protein belongs to the protein kinase superfamily. Ser/Thr protein kinase family.

It is found in the membrane. It carries out the reaction L-seryl-[protein] + ATP = O-phospho-L-seryl-[protein] + ADP + H(+). It catalyses the reaction L-threonyl-[protein] + ATP = O-phospho-L-threonyl-[protein] + ADP + H(+). Its function is as follows. Serine/threonine-protein kinase that may function as a signaling receptor of extracellular matrix component. The sequence is that of Wall-associated receptor kinase-like 20 (WAKL20) from Arabidopsis thaliana (Mouse-ear cress).